A 91-amino-acid polypeptide reads, in one-letter code: Small ribosomal subunit protein bS16 (91 aa).

Belongs to the bacterial ribosomal protein bS16 family.

In Staphylococcus epidermidis (strain ATCC 35984 / DSM 28319 / BCRC 17069 / CCUG 31568 / BM 3577 / RP62A), this protein is Small ribosomal subunit protein bS16.